We begin with the raw amino-acid sequence, 189 residues long: Ras-like protein 1 (189 aa).

10-17 (GAGGVGKS) contacts GTP. The short motif at 32–40 (YDPTIEDSY) is the Effector region element. Residues 57–61 (DTAGQ) and 116–119 (NKCD) each bind GTP. A Cysteine methyl ester modification is found at C186. C186 carries S-geranylgeranyl cysteine lipidation. The propeptide at 187-189 (KIL) is removed in mature form.

Belongs to the small GTPase superfamily. Ras family.

The protein localises to the cell membrane. The catalysed reaction is GTP + H2O = GDP + phosphate + H(+). Its activity is regulated as follows. Alternates between an inactive form bound to GDP and an active form bound to GTP. Activated by a guanine nucleotide-exchange factor (GEF) and inactivated by a GTPase-activating protein (GAP). Ras proteins bind GDP/GTP and possess intrinsic GTPase activity. Plays a role in eye development by regulating cell growth, survival of postmitotic ommatidial cells and differentiation of photoreceptor cells. During larval development, mediates Ptth/tor signaling leading to the production of ecdysone, a hormone required for the initiation of metamorphosis. The protein is Ras-like protein 1 of Drosophila persimilis (Fruit fly).